A 246-amino-acid chain; its full sequence is Ureidoacrylate amidohydrolase RutB (246 aa).

The interval 1-27 (MSAVTAAGYQAPQERSQSVTLPARPEP) is disordered. Aspartate 41 acts as the Proton acceptor in catalysis. Lysine 150 is a catalytic residue. Residue cysteine 183 is the Nucleophile of the active site.

Belongs to the isochorismatase family. RutB subfamily.

It catalyses the reaction (Z)-3-ureidoacrylate + H2O + H(+) = (Z)-3-aminoacrylate + NH4(+) + CO2. The enzyme catalyses (Z)-3-ureidoacrylate + H2O = (Z)-3-aminoacrylate + carbamate + H(+). It carries out the reaction (Z)-2-methylureidoacrylate + H2O + H(+) = (Z)-2-methylaminoacrylate + NH4(+) + CO2. Hydrolyzes ureidoacrylate to form aminoacrylate and carbamate. The carbamate hydrolyzes spontaneously, thereby releasing one of the nitrogen atoms of the pyrimidine ring as ammonia and one of its carbon atoms as CO2. The sequence is that of Ureidoacrylate amidohydrolase RutB from Rhizobium rhizogenes (strain K84 / ATCC BAA-868) (Agrobacterium radiobacter).